Reading from the N-terminus, the 546-residue chain is Plastidic glucose transporter 4 (546 aa).

Helical transmembrane passes span 105-125 (VLPFVGVACLGAILFGYHLGV), 148-168 (WIVSSLLAGATVGSFTGGALA), 182-202 (IPLAIGAFLCATAQSVQTMIV), 205-225 (LLAGIGIGISSAIVPLYISEI), 240-260 (LFICIGILAALIAGLPLAANP), 265-285 (TMFGVAVIPSVLLAIGMAFSP), 345-365 (VVSVGAALFLFQQLAGINAVV), 381-401 (VAASALVGASNVFGTAVASSL), 410-430 (LLLTSFGGMALSMLLLSLSFT), 441-461 (LAVVGTVLYVLSFSLGAGPVP), 477-497 (AVALSLGMHWISNFVIGLYFL), and 503-523 (FGISSVYLGFAGVCVLAVLYI).

It belongs to the major facilitator superfamily. Sugar transporter (TC 2.A.1.1) family.

Its subcellular location is the plastid. It localises to the chloroplast inner membrane. Functionally, may be involved in the efflux of glucose towards the cytosol. The polypeptide is Plastidic glucose transporter 4 (Arabidopsis thaliana (Mouse-ear cress)).